The sequence spans 903 residues: DNA gyrase subunit A (903 aa).

Residues 36–499 form the Topo IIA-type catalytic domain; sequence LPDARDGFKP…AIDDSDDEDL (464 aa). Residue Tyr124 is the O-(5'-phospho-DNA)-tyrosine intermediate of the active site. Positions 526–532 match the GyrA-box motif; that stretch reads QNRGGKG. Positions 881–895 are enriched in basic and acidic residues; sequence VDDDSVVKDDAEKQE. Residues 881–903 are disordered; that stretch reads VDDDSVVKDDAEKQEIGPTETEE.

Belongs to the type II topoisomerase GyrA/ParC subunit family. As to quaternary structure, heterotetramer, composed of two GyrA and two GyrB chains. In the heterotetramer, GyrA contains the active site tyrosine that forms a transient covalent intermediate with DNA, while GyrB binds cofactors and catalyzes ATP hydrolysis.

The protein localises to the cytoplasm. The enzyme catalyses ATP-dependent breakage, passage and rejoining of double-stranded DNA.. A type II topoisomerase that negatively supercoils closed circular double-stranded (ds) DNA in an ATP-dependent manner to modulate DNA topology and maintain chromosomes in an underwound state. Negative supercoiling favors strand separation, and DNA replication, transcription, recombination and repair, all of which involve strand separation. Also able to catalyze the interconversion of other topological isomers of dsDNA rings, including catenanes and knotted rings. Type II topoisomerases break and join 2 DNA strands simultaneously in an ATP-dependent manner. This chain is DNA gyrase subunit A, found in Fibrobacter succinogenes (strain ATCC 19169 / S85).